Reading from the N-terminus, the 1353-residue chain is Stress response protein NST1 (1353 aa).

Residues 1–12 (MSSKSQQPPTGL) show a composition bias toward polar residues. 9 disordered regions span residues 1 to 66 (MSSK…FFNF), 216 to 422 (NANA…TQSS), 503 to 522 (NGLR…VEVD), 531 to 618 (DHRA…SFGS), 652 to 694 (RRSV…AEEG), 727 to 882 (LREL…AKET), 979 to 1119 (GLKS…DDAF), 1140 to 1276 (GSLI…GAGV), and 1308 to 1337 (GGTA…HQQQ). Positions 16–25 (AAKKRAKKAA) are enriched in basic residues. Over residues 26–45 (KQSQNPQPQSAPQTSSQTPA) the composition is skewed to low complexity. Residues 46–59 (SVPPLPPASVPDPL) show a composition bias toward pro residues. The segment covering 218–229 (NARSFPSPQQTI) has biased composition (polar residues). The span at 242–254 (REEEYDDEEEIEE) shows a compositional bias: acidic residues. Over residues 268–277 (KKNKKKKKKG) the composition is skewed to basic residues. Pro residues predominate over residues 287–300 (VEPPAPLPPLPPPS). Residues 317–330 (LPTHQPQPLSQQPP) show a composition bias toward low complexity. Residues 331-349 (SLNPLPPPAPASAPTPTPP) show a composition bias toward pro residues. Over residues 368–388 (PARSARAAGKAPASAAPPHNA) the composition is skewed to low complexity. Residues 531-541 (DHRAPELHDHD) are compositionally biased toward basic and acidic residues. Positions 542 to 583 (PDDLDGEESEEYDDDDDYADDDELDDDDIGTDEADVGDEIDE) are enriched in acidic residues. The segment covering 654 to 665 (SVREEQNLRDMQ) has biased composition (basic and acidic residues). Residues 666–681 (EETDEEEEEEDDDESR) are compositionally biased toward acidic residues. 3 stretches are compositionally biased toward basic and acidic residues: residues 682–694 (DEPM…AEEG), 727–750 (LREL…EAQK), and 760–882 (QKAE…AKET). The stretch at 713–944 (AYRERVAKQR…AAQQAQRERA (232 aa)) forms a coiled coil. Residues 1009–1021 (TNATPGRSMQKTP) show a composition bias toward polar residues. Residues 1154–1165 (PTPPAPIAPPNL) are compositionally biased toward pro residues. Composition is skewed to polar residues over residues 1174–1187 (SDGQ…LRST) and 1209–1220 (QPQQRRPTTSWD).

This sequence belongs to the NST1 family.

It localises to the cytoplasm. Functionally, may act as a negative regulator of salt tolerance. This chain is Stress response protein NST1 (NST1), found in Cryptococcus neoformans var. neoformans serotype D (strain B-3501A) (Filobasidiella neoformans).